A 601-amino-acid polypeptide reads, in one-letter code: MFSCFCFSLQDNSFGSAAVTECDEDTVSVHEDEDDCSGLRDEDNKENYPQVAARLDELALPSHEAQQHVEQTLPVDGVLRTSMGNFKSRKPKSILRAESGRNHGESQETEHVVPSQSECQGRAGTPAHESPQSSIFRCQETVRLQPRIDQRATIWPKDAFGTQQDLHENSLLKLQALESGLCSAFLTTQEEDGQVHGVKDPAPASTQSAPADSADPADPMPAHKDAPGDADGTSEDLQSAGTSRLLYHITDGDNPLLSPRCSIFSQSQRFNLDPESAPSPPSSQQFMMPRSSSRCGSGDGKEPQTITQLTKHIQSLKRKIRKFEEKFEQEKKYRPSHGDKTSNPEVLKWMNDLAKGRKQLKELKLKLSEEQGSTPKGPRRNLSCEQPPVPRENGKSEAVGPEPGSSGEETSDAVVPEKREQTPPQDDGKGTKQDKNLIKPLYDRCRGIKQILPTPSLIPTIQEEEDSDEDCPQGSQQPSLPDPVSRLPVGDHLIYSETEPVRTLLPDEKKEGKQPALSMSNLHEATMPVLLDHLRETRADKKRLRKALREFEEQFFKQTGRSPQKEDRMPMADEYCEYKHIKAKLRLLEVLISKQDVAKTI.

Disordered regions lie at residues 82–134 (SMGN…PQSS) and 192–238 (DGQV…EDLQ). The span at 98 to 111 (ESGRNHGESQETEH) shows a compositional bias: basic and acidic residues. Ser-130 carries the phosphoserine modification. Residues 200-217 (DPAPASTQSAPADSADPA) are compositionally biased toward low complexity. Phosphoserine is present on Ser-258. Disordered stretches follow at residues 268–304 (QRFN…KEPQ), 327–352 (FEQE…WMND), and 366–485 (KLSE…DPVS). Residues 282 to 294 (SSQQFMMPRSSSR) show a composition bias toward low complexity. The segment covering 327–342 (FEQEKKYRPSHGDKTS) has biased composition (basic and acidic residues). A phosphoserine mark is found at Ser-405 and Ser-406. Basic and acidic residues predominate over residues 415–446 (VPEKREQTPPQDDGKGTKQDKNLIKPLYDRCR). Positions 462–471 (QEEEDSDEDC) are enriched in acidic residues.

Belongs to the FAM13 family.

In Mus musculus (Mouse), this protein is Protein FAM13C (Fam13c).